The following is a 246-amino-acid chain: MGRGRVELKRIENKINRQVTFAKRRNGLLKKAYELSVLCDAEVALIIFSNRGKLYEFCSTSSMVKTIEKYQRCSYATLEANQSVTDTQNNYHEYLRLKARVELLQRSQRNFLGEDLGTLSSKDLEQLENQLESSLKQIRSRKTQFMLDQLADLQQKEQMLAESNRLLRRKLEESVAGFPLRLCWEDGGDHQLMHQQNRLPNTEGFFQPLGLHSSSPHFGYNPVNTDEVNAAATAHNMNGFIHGWML.

In terms of domain architecture, MADS-box spans 1–61; it reads MGRGRVELKR…GKLYEFCSTS (61 aa). Residues 87–177 form the K-box domain; the sequence is TQNNYHEYLR…RRKLEESVAG (91 aa).

It localises to the nucleus. In terms of biological role, MADS-box transcription factor that acts redundantly with J2 to control meristem maturation and inflorescence architecture. The sequence is that of MADS-box protein EJ2 from Solanum lycopersicum (Tomato).